The following is a 122-amino-acid chain: Large ribosomal subunit protein uL24 (122 aa).

Belongs to the universal ribosomal protein uL24 family. As to quaternary structure, part of the 50S ribosomal subunit.

Its function is as follows. One of two assembly initiator proteins, it binds directly to the 5'-end of the 23S rRNA, where it nucleates assembly of the 50S subunit. In terms of biological role, located at the polypeptide exit tunnel on the outside of the subunit. The polypeptide is Large ribosomal subunit protein uL24 (Pyrobaculum arsenaticum (strain DSM 13514 / JCM 11321 / PZ6)).